The primary structure comprises 182 residues: Dipetalodipin (182 aa).

Residues 1–18 (MKTIIAAIFLGILMHAFA) form the signal peptide. Cystine bridges form between C21-C134, C55-C181, and C87-C103.

This sequence belongs to the calycin superfamily. Triabin family. In terms of tissue distribution, expressed in salivary glands.

It localises to the secreted. Functionally, inhibits platelet aggregation, vasoconstriction, and angiogenesis through binding to distinct eicosanoids involved in inflammation (acts as a scavenger), and has a role in inhibiting host innate immunity by impairing platelet-assisted formation of neutrophil extracellular traps (NETs). Inhibits platelet aggregation by collagen (IC(50)=30 nM), thromboxane A2 mimetic (TXA2 mimetic), or arachidonic acid (AA) without affecting aggregation induced by ADP, convulxin (GP6 agonist), PMA, and ristocetin (vWF-dependent platelet agglutinator). Binds with high affinity to TXA2, TXB2, prostaglandine H2 mimetic (PGH2 mimetic), PGD2, PGJ2, and PGF2alpha. Also interacts with 15(S)-hydroxyeicosatetraenoic acid (HETE), being the first calycin/lipocalin described to date to bind to a derivative of 15-lipoxygenase. Binding is not observed to other prostaglandins, leukotrienes, HETEs, lipids, and biogenic amines. It prevents contraction of rat uterus stimulated by PGF2alpha and induces relaxation of aorta previously contracted with TXA2 mimetic. In addition, it inhibits angiogenesis mediated by 15(S)-HETE and does not enhance inhibition of collagen-induced platelet aggregation by SQ29548 (TXA2 antagonist) and indomethacin. Also impairs platelet-assisted formation of neutrophil extracellular traps (NETs). NETs are web-like structures of DNA and proteins that play an important role in killing of pathogens. In addition, NETs are implicated in thrombus formation. In vivo, this protein exhibits antithrombotic activity in two distinct mice models that are highly dependent on platelets. It is noteworthy that it inhibits thrombosis without promoting excessive bleeding. The polypeptide is Dipetalodipin (Dipetalogaster maximus (Blood-sucking bug)).